Here is a 368-residue protein sequence, read N- to C-terminus: RNA polymerase sigma factor SigA (368 aa).

Positions 16 to 90 are sigma-70 factor domain-1; the sequence is TLTLEDVKKQ…KLNPSDLSAP (75 aa). Residues 69–90 form a disordered region; that stretch reads LVNEKDSSDTDEKLNPSDLSAP. Residues 71 to 83 are compositionally biased toward basic and acidic residues; sequence NEKDSSDTDEKLN. Residues 135–205 are sigma-70 factor domain-2; the sequence is LAEANLRLVV…TRAIADQART (71 aa). An Interaction with polymerase core subunit RpoC motif is present at residues 159–162; the sequence is DLIQ. A sigma-70 factor domain-3 region spans residues 214-291; it reads ETINKLIRVQ…QEAQSPSDHA (78 aa). The segment at 303 to 356 is sigma-70 factor domain-4; sequence VLDTLTDREENVLRLRFGLDDGRTRTLEEVGKVFGVTRERIRQIEAKALRKLRH. The segment at residues 329–348 is a DNA-binding region (H-T-H motif); that stretch reads LEEVGKVFGVTRERIRQIEA.

It belongs to the sigma-70 factor family. RpoD/SigA subfamily. As to quaternary structure, interacts transiently with the RNA polymerase catalytic core formed by RpoA, RpoB, RpoC and RpoZ (2 alpha, 1 beta, 1 beta' and 1 omega subunit) to form the RNA polymerase holoenzyme that can initiate transcription. Interacts (via sigma-70 factor domain 4) with the phage G1 protein gp67; this inhibits rRNA synthesis. Interaction with phage G1 protein gp67 does not inhibit transcription in general, but selectively inhibits transcription from promoters that require interaction of the RNA polymerase alpha subunit with DNA sequences upstream of the -35 promoter element.

It localises to the cytoplasm. In terms of biological role, sigma factors are initiation factors that promote the attachment of RNA polymerase to specific initiation sites and are then released. This sigma factor is the primary sigma factor during exponential growth. The sequence is that of RNA polymerase sigma factor SigA from Staphylococcus aureus (strain NCTC 8325 / PS 47).